We begin with the raw amino-acid sequence, 413 residues long: Serine/threonine transporter SstT (413 aa).

9 consecutive transmembrane segments (helical) span residues 11 to 31, 43 to 63, 82 to 102, 141 to 161, 192 to 212, 216 to 236, 298 to 318, 339 to 359, and 363 to 383; these read IANG…VILA, FLGS…VFVL, IIGL…LFSF, ALLT…GITM, IGIF…ALAG, LLMV…PIIV, MGGA…TLGI, ASGV…LFGI, and VAMQ…SAET.

This sequence belongs to the dicarboxylate/amino acid:cation symporter (DAACS) (TC 2.A.23) family.

Its subcellular location is the cell inner membrane. It catalyses the reaction L-serine(in) + Na(+)(in) = L-serine(out) + Na(+)(out). The enzyme catalyses L-threonine(in) + Na(+)(in) = L-threonine(out) + Na(+)(out). Functionally, involved in the import of serine and threonine into the cell, with the concomitant import of sodium (symport system). This is Serine/threonine transporter SstT from Shewanella frigidimarina (strain NCIMB 400).